Reading from the N-terminus, the 285-residue chain is Secreted RxLR effector protein 106 (285 aa).

Residues 1-24 form the signal peptide; sequence MSVRYAGLLLAAVAVSAHINEVNS. The short motif at 42–54 is the RxLR-dEER element; the sequence is RDLRSADNGNEER. N-linked (GlcNAc...) asparagine glycosylation is found at N182 and N187. Positions 220–229 are enriched in basic and acidic residues; it reads IEGDKEKKGG. Positions 220 to 262 are disordered; sequence IEGDKEKKGGPDYVEGTESRGKKRGQTEAPDLEPGLTPKQKRL. The Bipartite nuclear localization signal signature appears at 239 to 264; that stretch reads RGKKRGQTEAPDLEPGLTPKQKRLKR.

This sequence belongs to the RxLR effector family. In terms of assembly, interacts with host RCD1 and SRO1 transcription co-regulators.

It is found in the secreted. Its subcellular location is the host nucleus. Functionally, secreted effector that suppresses pathogen-associated molecular pattern (PAMP)-triggered immunity (PTI) in host plants. Binds to RCD1 and SRO1 transcription co-regulators to attenuate transcriptional activation of salicylic acid (SA)-induced defense genes and alters plant growth responses to light. Suppresses SA signal transduction but not SA levels. This Hyaloperonospora arabidopsidis (strain Emoy2) (Downy mildew agent) protein is Secreted RxLR effector protein 106.